A 105-amino-acid chain; its full sequence is Thioredoxin (105 aa).

Residues 1-105 (MFELDKDTFE…NVEAMVKKYI (105 aa)) form the Thioredoxin domain. Cysteines 29 and 32 form a disulfide.

This sequence belongs to the thioredoxin family.

In terms of biological role, participates in various redox reactions through the reversible oxidation of its active center dithiol to a disulfide and catalyzes dithiol-disulfide exchange reactions. The protein is Thioredoxin (trxA) of Acetoanaerobium sticklandii (strain ATCC 12662 / DSM 519 / JCM 1433 / CCUG 9281 / NCIMB 10654 / HF) (Clostridium sticklandii).